A 293-amino-acid chain; its full sequence is Prohibitin-2 (293 aa).

The chain crosses the membrane as a helical; Signal-anchor for type II membrane protein span at residues 21–41; that stretch reads FGGGFGLLALGGVGLLALSSL. Residues 190–235 adopt a coiled-coil conformation; it reads GREYAAAIEAKQVAQQEAERARFLVEKALQDKRSIIVKAEGEAQSA.

The protein belongs to the prohibitin family. As to quaternary structure, the mitochondrial prohibitin complex consists of two subunits (PHB1 and PHB2), assembled into a membrane-associated ring-shaped supercomplex of approximately 1 mDa.

The protein resides in the mitochondrion inner membrane. It localises to the cytoplasm. Its subcellular location is the nucleus. It is found in the cell membrane. In terms of biological role, protein with pleiotropic attributes mediated in a cell-compartment- and tissue-specific manner, which include the plasma membrane-associated cell signaling functions, mitochondrial chaperone, and transcriptional co-regulator of transcription factors and sex steroid hormones in the nucleus. Functionally, in the mitochondria, together with PHB, forms large ring complexes (prohibitin complexes) in the inner mitochondrial membrane (IMM) and functions as a chaperone protein that stabilizes mitochondrial respiratory enzymes and maintains mitochondrial integrity in the IMM, which is required for mitochondrial morphogenesis, neuronal survival, and normal lifespan. Its function is as follows. In the nucleus, serves as transcriptional co-regulator. The polypeptide is Prohibitin-2 (phbB) (Dictyostelium discoideum (Social amoeba)).